A 589-amino-acid chain; its full sequence is Vomeromodulin (589 aa).

Residues 1–29 form the signal peptide; sequence MWVLQALAIMLSIQAGVLDLVEVPPVVRS. 2 disordered regions span residues 49–71 and 146–170; these read GLNDPAKNRMLPPKRPGAPSRGG and LLGKEGNEDPSKPSSGSKATGGLGQ. N-linked (GlcNAc...) asparagine glycosylation is found at Asn419 and Asn437.

N-glycosylated. The N-glycans consist mainly of complex sialylated and fucosylated biantennary structures. In terms of tissue distribution, abundant in the lateral nasal glands. Also present in the posterior septal and vomeronasal glands.

The protein localises to the secreted. The polypeptide is Vomeromodulin (Rattus norvegicus (Rat)).